The primary structure comprises 740 residues: Arf-GAP with coiled-coil, ANK repeat and PH domain-containing protein 1 (740 aa).

A BAR domain is found at 1–226 (MTVKLDFEEC…RKELGAQLHQ (226 aa)). Residues 1–382 (MTVKLDFEEC…RGPGQGSGHL (382 aa)) are required for formation of endosomal tubules when overexpressed with PIP5K1C. In terms of domain architecture, PH spans 265-360 (GLVMEGHLFK…WVSAVQSSIA (96 aa)). The region spanning 405–527 (GHVVAQVQSV…KFLTKLPEIR (123 aa)) is the Arf-GAP domain. Positions 405–740 (GHVVAQVQSV…SRRSHDLHTL (336 aa)) are required for interaction with GULP1. Residues 420 to 443 (CCDCREPAPEWASINLGVTLCIQC) form a C4-type zinc finger. Tyr-485 carries the 3'-nitrotyrosine modification. The tract at residues 525 to 566 (EIRGRRGGRGRPRGQPPVPPKPSIRPRPGSLRSKPEPPSEDL) is prevents interaction with ITGB1 when S-554 is not phosphorylated. Positions 525-581 (EIRGRRGGRGRPRGQPPVPPKPSIRPRPGSLRSKPEPPSEDLGSLHPGALLFRASGH) are disordered. Pro residues predominate over residues 538 to 549 (GQPPVPPKPSIR). Ser-554 carries the post-translational modification Phosphoserine; by PKB. ANK repeat units lie at residues 606-635 (DNAT…NVNQ), 639-668 (AGRG…DLGA), and 672-702 (EGRD…EAEA).

As to quaternary structure, banana-shaped homodimer laterally assembling into tetramers, the tetramers further pack helically onto the membrane. Interacts with GTP-bound ARF6. Interacts with third cytoplasmic loop of SLC2A4/GLUT4. Interacts with CLTC. Interacts with GULP1. Forms a complex with GDP-bound ARF6 and GULP1. Interacts with ITGB1; required for ITGB1 recycling. Phosphorylation at Ser-554 by PKB is required for interaction with ITGB1, export of ITGB1 from recycling endosomes to the cell surface and ITGB1-dependent cell migration. In terms of tissue distribution, highest level in lung and spleen. Low level in heart, kidney, liver and pancreas.

It is found in the recycling endosome membrane. Its activity is regulated as follows. GAP activity stimulated by phosphatidylinositol 4,5-bisphosphate (PIP2) and phosphatidic acid. Its function is as follows. GTPase-activating protein (GAP) for ADP ribosylation factor 6 (ARF6) required for clathrin-dependent export of proteins from recycling endosomes to trans-Golgi network and cell surface. Required for regulated export of ITGB1 from recycling endosomes to the cell surface and ITGB1-dependent cell migration. This is Arf-GAP with coiled-coil, ANK repeat and PH domain-containing protein 1 (ACAP1) from Homo sapiens (Human).